Consider the following 401-residue polypeptide: Acetate kinase (401 aa).

Residue N9 coordinates Mg(2+). K16 serves as a coordination point for ATP. Residue R88 participates in substrate binding. The active-site Proton donor/acceptor is D147. ATP-binding positions include 207 to 211 (HLGNG), 282 to 284 (DCR), and 333 to 337 (GIGEN). Mg(2+) is bound at residue E388.

It belongs to the acetokinase family. In terms of assembly, homodimer. Mg(2+) is required as a cofactor. The cofactor is Mn(2+).

The protein resides in the cytoplasm. It carries out the reaction acetate + ATP = acetyl phosphate + ADP. It functions in the pathway metabolic intermediate biosynthesis; acetyl-CoA biosynthesis; acetyl-CoA from acetate: step 1/2. Its function is as follows. Catalyzes the formation of acetyl phosphate from acetate and ATP. Can also catalyze the reverse reaction. The chain is Acetate kinase from Haemophilus influenzae (strain PittGG).